A 150-amino-acid chain; its full sequence is Arginine repressor (150 aa).

It belongs to the ArgR family.

Its subcellular location is the cytoplasm. It participates in amino-acid biosynthesis; L-arginine biosynthesis [regulation]. Regulates arginine biosynthesis genes. This Clostridium botulinum (strain Loch Maree / Type A3) protein is Arginine repressor.